Consider the following 247-residue polypeptide: uncharacterized protein (247 aa).

Belongs to the AIM2 family.

The protein localises to the cytoplasm. Its subcellular location is the nucleus. This is an uncharacterized protein from Schizosaccharomyces pombe (strain 972 / ATCC 24843) (Fission yeast).